A 408-amino-acid chain; its full sequence is Broad specificity amino-acid racemase (408 aa).

Positions Met1–Ser24 are cleaved as a signal peptide. Cys71 and Cys97 are joined by a disulfide. The active-site Proton acceptor is Lys75. Residue Lys75 is modified to N6-(pyridoxal phosphate)lysine. Arg174 lines the substrate pocket. Tyr300 functions as the Proton acceptor in the catalytic mechanism. Substrate is bound at residue Met348.

This sequence belongs to the alanine racemase family. Bsr subfamily. The cofactor is pyridoxal 5'-phosphate.

The protein localises to the periplasm. It catalyses the reaction an L-alpha-amino acid = a D-alpha-amino acid. The enzyme catalyses L-lysine = D-lysine. The catalysed reaction is L-arginine = D-arginine. Amino-acid racemase able to utilize a broad range of substrates. This Vibrio vulnificus (strain CMCP6) protein is Broad specificity amino-acid racemase (alr).